The primary structure comprises 109 residues: MFGKGGLGNLMKQAQQMQERMQKMQEEIAQLEVTGESGAGLVKVTINGAHNCRRIEIDASLMEDDKEMVEDLVAAAFNDAVRRAEDLQKEKMASVTSGMQLPPGMKLPF.

It belongs to the YbaB/EbfC family. As to quaternary structure, homodimer.

The protein localises to the cytoplasm. It is found in the nucleoid. Functionally, binds to DNA and alters its conformation. May be involved in regulation of gene expression, nucleoid organization and DNA protection. In Haemophilus ducreyi (strain 35000HP / ATCC 700724), this protein is Nucleoid-associated protein HD_0326.